A 320-amino-acid chain; its full sequence is Thymidylate synthase (320 aa).

Residues arginine 27 and 182 to 183 each bind dUMP; that span reads RR. Catalysis depends on cysteine 202, which acts as the Nucleophile. Residues 222-225, asparagine 233, and 263-265 contribute to the dUMP site; these read RSAD and HIY. (6R)-5,10-methylene-5,6,7,8-tetrahydrofolate is bound at residue aspartate 225. Residue alanine 319 participates in (6R)-5,10-methylene-5,6,7,8-tetrahydrofolate binding.

Belongs to the thymidylate synthase family. Bacterial-type ThyA subfamily. In terms of assembly, homodimer.

The protein resides in the cytoplasm. It catalyses the reaction dUMP + (6R)-5,10-methylene-5,6,7,8-tetrahydrofolate = 7,8-dihydrofolate + dTMP. It participates in pyrimidine metabolism; dTTP biosynthesis. Catalyzes the reductive methylation of 2'-deoxyuridine-5'-monophosphate (dUMP) to 2'-deoxythymidine-5'-monophosphate (dTMP) while utilizing 5,10-methylenetetrahydrofolate (mTHF) as the methyl donor and reductant in the reaction, yielding dihydrofolate (DHF) as a by-product. This enzymatic reaction provides an intracellular de novo source of dTMP, an essential precursor for DNA biosynthesis. The chain is Thymidylate synthase from Limosilactobacillus reuteri (strain DSM 20016) (Lactobacillus reuteri).